Consider the following 152-residue polypeptide: Arginine repressor (152 aa).

It belongs to the ArgR family.

It localises to the cytoplasm. It participates in amino-acid biosynthesis; L-arginine biosynthesis [regulation]. In terms of biological role, regulates arginine biosynthesis genes. The protein is Arginine repressor of Thermotoga sp. (strain RQ2).